The primary structure comprises 151 residues: uncharacterized protein (151 aa).

This is an uncharacterized protein from Aquifex aeolicus (strain VF5).